The chain runs to 723 residues: Translation initiation factor IF-2 (723 aa).

Residues 112-138 form a disordered region; it reads KIFNNKKNKKQKPQQAPQQEVQKKKEK. Positions 114–123 are enriched in basic residues; it reads FNNKKNKKQK. A tr-type G domain is found at 224-393; that stretch reads ERPPVVTIMG…LLVSEMEELK (170 aa). The interval 233-240 is G1; the sequence is GHVDHGKT. 233 to 240 lines the GTP pocket; sequence GHVDHGKT. The segment at 258–262 is G2; the sequence is GITQH. Residues 279–282 form a G3 region; the sequence is DTPG. GTP is bound by residues 279–283 and 333–336; these read DTPGH and NKID. Residues 333–336 are G4; the sequence is NKID. Positions 369–371 are G5; that stretch reads SAL.

This sequence belongs to the TRAFAC class translation factor GTPase superfamily. Classic translation factor GTPase family. IF-2 subfamily.

Its subcellular location is the cytoplasm. In terms of biological role, one of the essential components for the initiation of protein synthesis. Protects formylmethionyl-tRNA from spontaneous hydrolysis and promotes its binding to the 30S ribosomal subunits. Also involved in the hydrolysis of GTP during the formation of the 70S ribosomal complex. This Anoxybacillus flavithermus (strain DSM 21510 / WK1) protein is Translation initiation factor IF-2.